The chain runs to 285 residues: HTH-type transcriptional regulator MurR (285 aa).

The HTH rpiR-type domain maps to 1-77; it reads MLYLTKISNA…MALIGEYSAS (77 aa). A DNA-binding region (H-T-H motif) is located at residues 37–56; that stretch reads SRQMAKQLGISQSSIVKFAQ. The 152-residue stretch at 128 to 279 folds into the SIS domain; sequence IIEVISKAPF…SLKMIQRSSE (152 aa).

As to quaternary structure, homotetramer.

It functions in the pathway amino-sugar metabolism; N-acetylmuramate degradation [regulation]. Functionally, represses the expression of the murPQ operon involved in the uptake and degradation of N-acetylmuramic acid (MurNAc). Binds to two adjacent inverted repeats within the operator region. MurNAc 6-phosphate, the substrate of MurQ, is the specific inducer that weakens binding of MurR to the operator. This chain is HTH-type transcriptional regulator MurR, found in Shigella boydii serotype 4 (strain Sb227).